Reading from the N-terminus, the 299-residue chain is Recombination-associated protein RdgC (299 aa).

This sequence belongs to the RdgC family.

It localises to the cytoplasm. The protein localises to the nucleoid. Functionally, may be involved in recombination. The protein is Recombination-associated protein RdgC of Bordetella bronchiseptica (strain ATCC BAA-588 / NCTC 13252 / RB50) (Alcaligenes bronchisepticus).